Here is a 206-residue protein sequence, read N- to C-terminus: Probable GTP-binding protein EngB (206 aa).

Residues 27-201 form the EngB-type G domain; sequence SGIEVAFAGR…EEKLNQWYSK (175 aa). GTP contacts are provided by residues 35–42, 62–66, 80–83, 147–150, and 180–182; these read GRSNAGKS, GRTQL, DLPG, TKAD, and FSS. Residues S42 and T64 each coordinate Mg(2+).

It belongs to the TRAFAC class TrmE-Era-EngA-EngB-Septin-like GTPase superfamily. EngB GTPase family. The cofactor is Mg(2+).

Necessary for normal cell division and for the maintenance of normal septation. The sequence is that of Probable GTP-binding protein EngB from Idiomarina loihiensis (strain ATCC BAA-735 / DSM 15497 / L2-TR).